Reading from the N-terminus, the 349-residue chain is Shematrin-like protein 1 (349 aa).

An N-terminal signal peptide occupies residues 1–16 (MLKLVCAVFLIATVSA).

Prismatic layer of shell (at protein level).

It is found in the secreted. The protein is Shematrin-like protein 1 of Margaritifera margaritifera (Freshwater pearl mussel).